A 346-amino-acid polypeptide reads, in one-letter code: Growth hormone-inducible transmembrane protein (346 aa).

Residues Met1 to Glu45 constitute a mitochondrion transit peptide. At Tyr46–Lys83 the chain is on the mitochondrial matrix side. The chain crosses the membrane as a helical span at residues Trp84–Met104. The Mitochondrial intermembrane portion of the chain corresponds to Ser105–His126. Residues Ser127 to Ala147 traverse the membrane as a helical segment. At Arg148–Ser160 the chain is on the mitochondrial matrix side. The helical transmembrane segment at Trp161 to Ile181 threads the bilayer. The Mitochondrial intermembrane segment spans residues Ser182–His191. Residues Leu192–Gly212 form a helical membrane-spanning segment. At Gly213 to Pro214 the chain is on the mitochondrial matrix side. Residues Leu215 to Met235 traverse the membrane as a helical segment. Over Cys236 to Met245 the chain is Mitochondrial intermembrane. A helical membrane pass occupies residues Gly246–Leu266. Topologically, residues Pro267–Ala272 are mitochondrial matrix. Residues Gly273–Leu293 form a helical membrane-spanning segment. Residues Tyr294 to Lys346 lie on the Mitochondrial intermembrane side of the membrane.

It belongs to the BI1 family. As to quaternary structure, interacts with LETM1 and AFG3L2. In terms of processing, undergoes AFG3L2-mediated proteolytic degradation, upon hyperpolarization of mitochondria.

Its subcellular location is the mitochondrion inner membrane. Functionally, plays an important role in maintenance of mitochondrial morphology and in mediating either calcium or potassium/proton antiport. Mediates proton-dependent calcium efflux from mitochondrion. Also functions as an electroneutral mitochondrial proton/potassium exchanger. Required for the mitochondrial tubular network and cristae organization. Involved in apoptotic release of cytochrome c. Inhibits AFG3L2 proteolytic activity, stimulating respiration and stabilizing respiratory enzymes in actively respiring mitochondria. However, when mitochondria become hyperpolarized, GHITM loses its inhibitory activity toward AFG3L2 and the now active AFG3L2 turns first on GHITM and, if hyperpolarization persists, on other proteins of the mitochondria, leading to a broad remodeling of the proteome. The chain is Growth hormone-inducible transmembrane protein (Ghitm) from Rattus norvegicus (Rat).